We begin with the raw amino-acid sequence, 1421 residues long: Envelopment polyprotein (1421 aa).

A signal peptide spans 1–20 (MEGSYWWLSLLALLAWGANG). Topologically, residues 21–479 (ESTSPAETSP…CRMSHRPRTC (459 aa)) are lumenal. Residues 22-31 (STSPAETSPA) show a composition bias toward low complexity. The interval 22–42 (STSPAETSPAPTTPNPPVVNP) is disordered. N-linked (GlcNAc...) asparagine; by host glycosylation is found at Asn97 and Asn346. A helical transmembrane segment spans residues 480-500 (LALFIWLGAGYGITCIAGYMV). Residues 501–610 (YYAILALSML…KLGTLLKRLS (110 aa)) lie on the Cytoplasmic side of the membrane. The helical transmembrane segment at 611-631 (WVTVFLCLFLTAIAPVQGQVT) threads the bilayer. The Lumenal portion of the chain corresponds to 632–643 (TSPVLPSNQSTE). An N-linked (GlcNAc...) asparagine; by host glycan is attached at Asn639. A helical transmembrane segment spans residues 644–664 (CTLLPPPVFLIFSAVLMSKTL). At 665–708 (KRMGPVNKVGAAGHSARRTNSPKNLYKSKQIANTKSGPREPRRR) the chain is on the cytoplasmic side. Residues 709-729 (VVVKALLILTASSALQSIHLA) form a helical membrane-spanning segment. The propeptide occupies 722–776 (ALQSIHLAQAFDSGSLPEGAWEEEMQLVQGCNQECSLEEDECSCPDGQSMTRKLL). The Lumenal portion of the chain corresponds to 730–1330 (QAFDSGSLPE…GSFFRNYLGS (601 aa)). 2 cysteine pairs are disulfide-bonded: Cys901–Cys1096 and Cys929–Cys934. N-linked (GlcNAc...) asparagine; by host glycosylation is found at Asn1081 and Asn1299. The helical transmembrane segment at 1331–1351 (ITLGIVLTLLPVAVVLLFFCY) threads the bilayer. The Cytoplasmic segment spans residues 1352-1421 (GDKLFKLCSC…GKGKNYKELV (70 aa)).

Belongs to the nairovirus envelope glycoprotein family. Heterodimer with glycoprotein C; in prefusion state. As to quaternary structure, heterodimer with glycoprotein N; in prefusion state. Homotrimeric; in postfusion state. Post-translationally, specific enzymatic cleavage by host MBTPS1/S1P/SKI-1 endopeptidase yield glycoprotein N. Specific enzymatic cleavages by host furin-like protease and MBTPS1/S1P endopeptidase yield GP38. Glycosylated.

Its subcellular location is the host endoplasmic reticulum membrane. The protein resides in the virion membrane. It localises to the host Golgi apparatus membrane. Functionally, glycoprotein N and glycoprotein C interact with each other and are present at the surface of the virion. Glycoprotein N probably locks the Gn-Gc complex in a prefusion state. Glycoprotein N and glycoprotein C are able to attach the virion to host cell receptors. This attachment induces virion internalization predominantly through clathrin-dependent endocytosis. Its function is as follows. Glycoprotein C and glycoprotein N interact with each other and are present at the surface of the virion. The spikes at the surface of the virion are formed by an N-terminal extension of glycoprotein C. Glycoprotein N and glycoprotein C are able to attach the virion to host cell receptors. This attachment induces virion internalization predominantly through clathrin-dependent endocytosis. Class II fusion protein that promotes fusion of viral membrane with host endosomal membrane after endocytosis of the virion. Exposure to potassium is necessary for the conformational change leading to fusion. The chain is Envelopment polyprotein (GP) from Ixodes.